We begin with the raw amino-acid sequence, 273 residues long: tRNA (guanine-N(7)-)-methyltransferase (273 aa).

S-adenosyl-L-methionine contacts are provided by G86, E109, R111, N142, A143, and L162. D165 is an active-site residue. Residues 166–174 (PHFKKTKHK) are alphaC helix. S-adenosyl-L-methionine is bound by residues T240 and E242. The interval 240–248 (TEEGKKVQR) is alpha6 helix.

This sequence belongs to the class I-like SAM-binding methyltransferase superfamily. TrmB family. As to quaternary structure, catalytic component of the METTL1-WDR4 complex, composed of mettl1 and wdr4.

It is found in the nucleus. The catalysed reaction is guanosine(46) in tRNA + S-adenosyl-L-methionine = N(7)-methylguanosine(46) in tRNA + S-adenosyl-L-homocysteine. The enzyme catalyses a guanosine in mRNA + S-adenosyl-L-methionine = an N(7)-methylguanosine in mRNA + S-adenosyl-L-homocysteine. It catalyses the reaction a guanosine in miRNA + S-adenosyl-L-methionine = an N(7)-methylguanosine in miRNA + S-adenosyl-L-homocysteine. The protein operates within tRNA modification; N(7)-methylguanine-tRNA biosynthesis. Its function is as follows. Catalytic component of METTL1-WDR4 methyltransferase complex that mediates the formation of N(7)-methylguanine in a subset of RNA species, such as tRNAs, mRNAs and microRNAs (miRNAs). Catalyzes the formation of N(7)-methylguanine at position 46 (m7G46) in a large subset of tRNAs that contain the 5'-RAGGU-3' motif within the variable loop. M7G46 interacts with C13-G22 in the D-loop to stabilize tRNA tertiary structure and protect tRNAs from decay. Also acts as a methyltransferase for a subset of internal N(7)-methylguanine in mRNAs. Internal N(7)-methylguanine methylation of mRNAs in response to stress promotes their relocalization to stress granules, thereby suppressing their translation. Also methylates a specific subset of miRNAs. The chain is tRNA (guanine-N(7)-)-methyltransferase (mettl1) from Xenopus laevis (African clawed frog).